The primary structure comprises 206 residues: MARYLGPKLKLSRREGTDLFLKSGVRAIDSKCKLESAPGQHGARKPRLSEYGLQLREKQKVRRIYGVLEKQFRNYYKEAARLKGNTGENLLQLLETRLDNVVYRMGFGATRAESRQLVSHKSVMVNGRVVNIPSFKVSANDVVSIREKSRTQARIKAALEVAAQREKPTWVEVDSAKMEGAFKRIPERSDLSAEINEQLIVELYSK.

In terms of domain architecture, S4 RNA-binding spans threonine 96–lysine 156.

The protein belongs to the universal ribosomal protein uS4 family. Part of the 30S ribosomal subunit. Contacts protein S5. The interaction surface between S4 and S5 is involved in control of translational fidelity.

Functionally, one of the primary rRNA binding proteins, it binds directly to 16S rRNA where it nucleates assembly of the body of the 30S subunit. Its function is as follows. With S5 and S12 plays an important role in translational accuracy. This chain is Small ribosomal subunit protein uS4, found in Shewanella sp. (strain MR-4).